A 381-amino-acid chain; its full sequence is MNENFHSFHEKELRDGQVESVSAGSSPPCDKDSSALLAFRGISISELKNHSVLQALTAEANAWEPRVVSTEVLQAQEEWEAVESIHPETGSRASMDQPGQLISFSEALQHFQTVDLSSFKKRIQPTIRRTGLAALRHYLFGPPKLHQGLREERDLVLTIAQCGLDSQDPMHGRVLQTIYKKLTGSKFDCALHGDHWEDLGFQGTNPATDLRGAGFLALLHLLYLVMDSKTLLMAREILRLSRHHIQQFPFCLMSVNITRIAIQALREECLSRECNRQQKVIPVVNSFYAATFLRLAHIWRTQHKTISDSGFVLKDLEMSAKKSPRRLLKTLETYLAGVSKGQASLLGTQKCSGPQAPHSKDLTFTGVCDLPSHLSEGTWLI.

Residues Met-1–Gln-17 show a composition bias toward basic and acidic residues. Residues Met-1 to Lys-31 are disordered. The region spanning Met-170–Pro-324 is the ELMO domain.

The protein localises to the cell projection. The protein resides in the stereocilium. It is found in the kinocilium. It localises to the cytoplasm. Its subcellular location is the cytoskeleton. Acts as a GTPase-activating protein (GAP) for ARL2 with low specific activity. The chain is ELMO domain-containing protein 3 (ELMOD3) from Bos taurus (Bovine).